We begin with the raw amino-acid sequence, 578 residues long: A-type ATP synthase subunit A (578 aa).

Residue 228–235 coordinates ATP; the sequence is GPFGSGKT.

Belongs to the ATPase alpha/beta chains family. In terms of assembly, has multiple subunits with at least A(3), B(3), C, D, E, F, H, I and proteolipid K(x).

The protein resides in the cell membrane. It catalyses the reaction ATP + H2O + 4 H(+)(in) = ADP + phosphate + 5 H(+)(out). In terms of biological role, component of the A-type ATP synthase that produces ATP from ADP in the presence of a proton gradient across the membrane. The A chain is the catalytic subunit. The sequence is that of A-type ATP synthase subunit A from Methanosarcina barkeri (strain Fusaro / DSM 804).